The sequence spans 505 residues: Glycerol kinase (505 aa).

Position 15 (T15) interacts with ADP. Residues T15, T16, and S17 each contribute to the ATP site. T15 lines the sn-glycerol 3-phosphate pocket. R19 contributes to the ADP binding site. Sn-glycerol 3-phosphate-binding residues include R85, E86, Y136, and D249. The glycerol site is built by R85, E86, Y136, D249, and Q250. 2 residues coordinate ADP: T271 and G314. 4 residues coordinate ATP: T271, G314, Q318, and G415. G415 and N419 together coordinate ADP.

The protein belongs to the FGGY kinase family.

It catalyses the reaction glycerol + ATP = sn-glycerol 3-phosphate + ADP + H(+). It participates in polyol metabolism; glycerol degradation via glycerol kinase pathway; sn-glycerol 3-phosphate from glycerol: step 1/1. Inhibited by fructose 1,6-bisphosphate (FBP). Its function is as follows. Key enzyme in the regulation of glycerol uptake and metabolism. Catalyzes the phosphorylation of glycerol to yield sn-glycerol 3-phosphate. This chain is Glycerol kinase, found in Mycoplasma capricolum subsp. capricolum (strain California kid / ATCC 27343 / NCTC 10154).